A 132-amino-acid polypeptide reads, in one-letter code: Small ribosomal subunit protein uS8 (132 aa).

It belongs to the universal ribosomal protein uS8 family. Part of the 30S ribosomal subunit. Contacts proteins S5 and S12.

Its function is as follows. One of the primary rRNA binding proteins, it binds directly to 16S rRNA central domain where it helps coordinate assembly of the platform of the 30S subunit. The chain is Small ribosomal subunit protein uS8 from Alkaliphilus oremlandii (strain OhILAs) (Clostridium oremlandii (strain OhILAs)).